An 854-amino-acid chain; its full sequence is Disrupted in schizophrenia 1 protein (854 aa).

The segment covering 1 to 18 has biased composition (gly residues); the sequence is MPGGGPQGAPAAAGGGGV. Disordered regions lie at residues 1–24, 179–205, 221–257, and 278–323; these read MPGG…RAGS, SAEL…SHSA, GERG…GPHE, and AQAA…SGDA. An interaction with MAP1A region spans residues 1–292; the sequence is MPGGGPQGAP…NSSRPERDMH (292 aa). Residues 197–203 carry the Interaction with FBXW7 motif; sequence PTPPGSH. Residues 285 to 295 show a composition bias toward basic and acidic residues; sequence SRPERDMHSLP. The interaction with TRAF3IP1 stretch occupies residues 293 to 696; that stretch reads SLPDMDPGSS…LGKVWEADLE (404 aa). The segment covering 296-309 has biased composition (low complexity); the sequence is DMDPGSSSSLDPSL. 3 coiled-coil regions span residues 366–394, 452–505, and 602–666; these read ENDD…HFQL, ITRR…CDLT, and WTAK…SVKE. Residue K372 forms a Glycyl lysine isopeptide (Lys-Gly) (interchain with G-Cter in ubiquitin) linkage. The required for localization to punctate cytoplasmic foci stretch occupies residues 440-597; sequence LEPTAQDSLH…LLEAKMHAIS (158 aa). A necessary and sufficient for interaction with PCNT and localization at the centrosome region spans residues 446-854; the sequence is DSLHVSITRR…MTAGVHEAQA (409 aa). An interaction with ATF4 and ATF5 region spans residues 598–854; sequence GNHFWTAKDL…MTAGVHEAQA (257 aa). The segment at 716–739 is disordered; it reads VEDERQMDDLEGAAPPIPPRLHSE. The segment at 727-854 is interaction with PAFAH1B1; the sequence is GAAPPIPPRL…MTAGVHEAQA (128 aa). Positions 802–830 form a coiled coil; the sequence is SHDEDLIQSLRRELQMVKETLQAMILQLQ. Positions 802–835 are interaction with NDEL1; it reads SHDEDLIQSLRRELQMVKETLQAMILQLQPAKEA.

Interacts with NDEL1. Interacts with CCDC88A (via C-terminus); the interaction is direct. Interacts with GSK3B. Interacts with tubulin alpha, ACTN2, ANKHD1, ATF4, ATF5, CEP63, EIF3S3, MAP1A, NDEL1, PAFAH1B1, RANBP9, SPTBN4, SYNE1 and TRAF3IP1. Interaction with microtubules may be mediated in part by TRAF3IP1. Interacts (via C-terminal) with PCNT. Interacts with CHCHD6. Interacts with CCDC141. Interacts with FBXW7, the substrate-recognition component of a SCF (SKP1-CUL1-F-box protein) E3 ubiquitin-protein ligase complex; the interaction targets DISC1 for proteasomal degradation. Interacts with ZNF365. Interacts with ATF4; inhibiting ATF4 transcription factor activity by disrupting ATF4 dimerization and DNA-binding. Interacts with PDE4B (isoform PDE4B5). Ubiquitinated. Ubiquitination with 'Lys-48'-linked polyubiquitin chains leads to its proteasomal degradation. In terms of tissue distribution, ubiquitous. Highly expressed in the dentate gyrus of the hippocampus. Also expressed in the temporal and parahippocampal cortices and cells of the white matter.

It localises to the cytoplasm. Its subcellular location is the cytoskeleton. The protein resides in the mitochondrion. It is found in the microtubule organizing center. The protein localises to the centrosome. It localises to the postsynaptic density. Its function is as follows. Involved in the regulation of multiple aspects of embryonic and adult neurogenesis. Required for neural progenitor proliferation in the ventrical/subventrical zone during embryonic brain development and in the adult dentate gyrus of the hippocampus. Participates in the Wnt-mediated neural progenitor proliferation as a positive regulator by modulating GSK3B activity and CTNNB1 abundance. Plays a role as a modulator of the AKT-mTOR signaling pathway controlling the tempo of the process of newborn neurons integration during adult neurogenesis, including neuron positioning, dendritic development and synapse formation. Inhibits the activation of AKT-mTOR signaling upon interaction with CCDC88A. Regulates the migration of early-born granule cell precursors toward the dentate gyrus during the hippocampal development. Inhibits ATF4 transcription factor activity in neurons by disrupting ATF4 dimerization and DNA-binding. Plays a role, together with PCNT, in the microtubule network formation. This chain is Disrupted in schizophrenia 1 protein, found in Homo sapiens (Human).